The following is a 267-amino-acid chain: MKKVTIRDFIKKKSMKEKITMLTAYDYPTAKIISNTTLDSILVGDSLGMVVLGYTNTLNVTMRDMISHTRAVARANPPQLIVSDMPFLSYEIDVKSAVKNAGLLVKAGSDAVKLEGGEEIKDIIRAIVKAGIPVMGHIGLTPQRFLRLGGFRTIGKTKQEEEQLIKDSLELEDAGVFSIVIENTYVDIAKRITEKLNVPTICIGAGPYCDGQVLVIHDLLGLSEVTPYFAKSYVNLKEIISSAINQYIIDVKTNKFPEKQHYKERES.

Residues aspartate 45 and aspartate 84 each contribute to the Mg(2+) site. 3-methyl-2-oxobutanoate is bound by residues 45-46, aspartate 84, and lysine 113; that span reads DS. Glutamate 115 is a Mg(2+) binding site. The Proton acceptor role is filled by glutamate 182.

Belongs to the PanB family. As to quaternary structure, homodecamer; pentamer of dimers. The cofactor is Mg(2+).

It is found in the cytoplasm. The catalysed reaction is 3-methyl-2-oxobutanoate + (6R)-5,10-methylene-5,6,7,8-tetrahydrofolate + H2O = 2-dehydropantoate + (6S)-5,6,7,8-tetrahydrofolate. The protein operates within cofactor biosynthesis; coenzyme A biosynthesis. Catalyzes the reversible reaction in which hydroxymethyl group from 5,10-methylenetetrahydrofolate is transferred onto alpha-ketoisovalerate to form ketopantoate. The protein is 3-methyl-2-oxobutanoate hydroxymethyltransferase of Saccharolobus solfataricus (strain ATCC 35092 / DSM 1617 / JCM 11322 / P2) (Sulfolobus solfataricus).